Reading from the N-terminus, the 95-residue chain is MSDSLWHLYLLRTASGMLYTGITTDVARRLAQHQAGKGAKALRGKGELTLVFHCEAGDRSTALKLEYRVKQLSKQQKEKLVIDQPRLLTTLFLDS.

A GIY-YIG domain is found at 4–79; sequence SLWHLYLLRT…KQLSKQQKEK (76 aa).

It belongs to the UPF0213 family.

This Yersinia pestis bv. Antiqua (strain Antiqua) protein is UPF0213 protein YPA_2977.